The sequence spans 254 residues: Chymotrypsin-like serine proteinase (254 aa).

The first 18 residues, 1 to 18, serve as a signal peptide directing secretion; that stretch reads MNALLNILLCTLAATALA. Residues 19–23 constitute a propeptide, activation peptide; that stretch reads EISPN. The Peptidase S1 domain occupies 24–254; that stretch reads IVGGSNAAAG…SSFYNWVQTQ (231 aa). Residues C53 and C69 are joined by a disulfide bond. Residues H68 and D117 each act as charge relay system in the active site. Disulfide bonds link C146/C218, C181/C199, and C208/C233. S212 functions as the Charge relay system in the catalytic mechanism.

It belongs to the peptidase S1 family. Monomer. As to expression, expressed specifically in the distal quarter of the intestine.

The protein localises to the secreted. Its subcellular location is the extracellular space. With respect to regulation, activated by an autocatalytic mechanism. Specificity similar to chymotrypsin. This chain is Chymotrypsin-like serine proteinase, found in Haliotis rufescens (California red abalone).